The primary structure comprises 249 residues: Probable transcriptional regulatory protein Minf_0651 (249 aa).

This sequence belongs to the TACO1 family.

Its subcellular location is the cytoplasm. This is Probable transcriptional regulatory protein Minf_0651 from Methylacidiphilum infernorum (isolate V4) (Methylokorus infernorum (strain V4)).